Consider the following 151-residue polypeptide: Small ribosomal subunit protein uS11 (151 aa).

This sequence belongs to the universal ribosomal protein uS11 family.

The sequence is that of Small ribosomal subunit protein uS11 (RPS14) from Podocoryna carnea (Hydrozoan).